We begin with the raw amino-acid sequence, 236 residues long: uncharacterized protein (236 aa).

The 69-residue stretch at 5-73 (QSTVENAKEK…DRKGWFVTQP (69 aa)) folds into the HTH gntR-type domain. The segment at residues 33-52 (ERELGELLGIKRMTLRQALL) is a DNA-binding region (H-T-H motif).

This is an uncharacterized protein from Escherichia coli O157:H7.